The chain runs to 573 residues: Probable pectinesterase/pectinesterase inhibitor 41 (573 aa).

The first 22 residues, 1–22 (MLSLKLFLVTLFLSLQTLFIAS), serve as a signal peptide directing secretion. Residues 25–184 (LLPSNSSSTI…TKLFSVSLAL (160 aa)) form a pectinesterase inhibitor 41 region. 7 N-linked (GlcNAc...) asparagine glycosylation sites follow: asparagine 29, asparagine 119, asparagine 173, asparagine 264, asparagine 268, asparagine 281, and asparagine 320. Residues 259–557 (VTVNQNGTGN…FTVENFLLGD (299 aa)) form a pectinesterase 41 region. Threonine 336 is a substrate binding site. N-linked (GlcNAc...) asparagine glycosylation is present at asparagine 353. Glutamine 366 provides a ligand contact to substrate. Residue aspartate 389 is the Proton donor; for pectinesterase activity of the active site. A disulfide bridge connects residues cysteine 403 and cysteine 423. The active-site Nucleophile; for pectinesterase activity is aspartate 410. N-linked (GlcNAc...) asparagine glycosylation is found at asparagine 456 and asparagine 469. Positions 478 and 480 each coordinate substrate. Asparagine 520, asparagine 541, and asparagine 547 each carry an N-linked (GlcNAc...) asparagine glycan.

This sequence in the N-terminal section; belongs to the PMEI family. The protein in the C-terminal section; belongs to the pectinesterase family. As to expression, expressed in flowers, siliques, floral stems and rosettes leaves.

It localises to the secreted. It is found in the cell wall. It carries out the reaction [(1-&gt;4)-alpha-D-galacturonosyl methyl ester](n) + n H2O = [(1-&gt;4)-alpha-D-galacturonosyl](n) + n methanol + n H(+). It functions in the pathway glycan metabolism; pectin degradation; 2-dehydro-3-deoxy-D-gluconate from pectin: step 1/5. Its function is as follows. Acts in the modification of cell walls via demethylesterification of cell wall pectin. The sequence is that of Probable pectinesterase/pectinesterase inhibitor 41 (PME41) from Arabidopsis thaliana (Mouse-ear cress).